A 439-amino-acid polypeptide reads, in one-letter code: Lipid-A-disaccharide synthase (439 aa).

It belongs to the LpxB family.

The catalysed reaction is a lipid X + a UDP-2-N,3-O-bis[(3R)-3-hydroxyacyl]-alpha-D-glucosamine = a lipid A disaccharide + UDP + H(+). It participates in bacterial outer membrane biogenesis; LPS lipid A biosynthesis. Functionally, condensation of UDP-2,3-diacylglucosamine and 2,3-diacylglucosamine-1-phosphate to form lipid A disaccharide, a precursor of lipid A, a phosphorylated glycolipid that anchors the lipopolysaccharide to the outer membrane of the cell. This chain is Lipid-A-disaccharide synthase, found in Xanthomonas axonopodis pv. citri (strain 306).